An 88-amino-acid chain; its full sequence is Small ribosomal subunit protein uS15 (88 aa).

It belongs to the universal ribosomal protein uS15 family. As to quaternary structure, part of the 30S ribosomal subunit. Forms a bridge to the 50S subunit in the 70S ribosome, contacting the 23S rRNA.

In terms of biological role, one of the primary rRNA binding proteins, it binds directly to 16S rRNA where it helps nucleate assembly of the platform of the 30S subunit by binding and bridging several RNA helices of the 16S rRNA. Its function is as follows. Forms an intersubunit bridge (bridge B4) with the 23S rRNA of the 50S subunit in the ribosome. The sequence is that of Small ribosomal subunit protein uS15 from Finegoldia magna (strain ATCC 29328 / DSM 20472 / WAL 2508) (Peptostreptococcus magnus).